A 357-amino-acid polypeptide reads, in one-letter code: Protein MGF 360-14L (357 aa).

The protein belongs to the asfivirus MGF 360 family. In terms of assembly, interacts with host IRF3 and TRIM21; these interactions mediates degradation of IRF3 through TRIM21 and ubiquitin-meditated proteolysis.

Its subcellular location is the host cytoplasm. In terms of biological role, plays a role in virus cell tropism, and may be required for efficient virus replication in macrophages. Also inhibits the host cGAS/STING-mediated type I interferon production by inducing host IRF3 degradation through the proteasome pathway. This is Protein MGF 360-14L from Ornithodoros (relapsing fever ticks).